Consider the following 33-residue polypeptide: Cysteine-rich venom protein (33 aa).

The interval N1–A33 is disordered. Basic residues predominate over residues S24–A33.

It belongs to the CRISP family. Post-translationally, contains 8 disulfide bonds. As to expression, expressed by the venom gland.

The protein resides in the secreted. Its function is as follows. Blocks contraction of smooth muscle elicited by high potassium-induced depolarization, but does not block caffeine-stimulated contraction. May target voltage-gated calcium channels on smooth muscle (Cav). This Naja naja (Indian cobra) protein is Cysteine-rich venom protein.